We begin with the raw amino-acid sequence, 299 residues long: Bifunctional protein FolD 2 (299 aa).

NADP(+) contacts are provided by residues 168–170, S193, and I234; that span reads GRS.

Belongs to the tetrahydrofolate dehydrogenase/cyclohydrolase family. In terms of assembly, homodimer.

It carries out the reaction (6R)-5,10-methylene-5,6,7,8-tetrahydrofolate + NADP(+) = (6R)-5,10-methenyltetrahydrofolate + NADPH. The catalysed reaction is (6R)-5,10-methenyltetrahydrofolate + H2O = (6R)-10-formyltetrahydrofolate + H(+). It participates in one-carbon metabolism; tetrahydrofolate interconversion. Functionally, catalyzes the oxidation of 5,10-methylenetetrahydrofolate to 5,10-methenyltetrahydrofolate and then the hydrolysis of 5,10-methenyltetrahydrofolate to 10-formyltetrahydrofolate. This Rhizobium meliloti (strain 1021) (Ensifer meliloti) protein is Bifunctional protein FolD 2.